The chain runs to 162 residues: uncharacterized protein (162 aa).

The PUA domain maps to 78–154 (KNLVVVDIGA…KAIKNLHYVG (77 aa)).

This is an uncharacterized protein from Methanocaldococcus jannaschii (strain ATCC 43067 / DSM 2661 / JAL-1 / JCM 10045 / NBRC 100440) (Methanococcus jannaschii).